Here is a 520-residue protein sequence, read N- to C-terminus: GMP synthase [glutamine-hydrolyzing] (520 aa).

Residues 12–205 (KIIVLDYGSQ…AISICGARGD (194 aa)) form the Glutamine amidotransferase type-1 domain. Cys89 functions as the Nucleophile in the catalytic mechanism. Active-site residues include His179 and Glu181. The GMPS ATP-PPase domain maps to 206–395 (WSMDNFIDME…LGMPEEIVWR (190 aa)). 233 to 239 (SGGVDSS) provides a ligand contact to ATP.

As to quaternary structure, homodimer.

It catalyses the reaction XMP + L-glutamine + ATP + H2O = GMP + L-glutamate + AMP + diphosphate + 2 H(+). The protein operates within purine metabolism; GMP biosynthesis; GMP from XMP (L-Gln route): step 1/1. Functionally, catalyzes the synthesis of GMP from XMP. This Streptococcus pyogenes serotype M1 protein is GMP synthase [glutamine-hydrolyzing].